The following is a 399-amino-acid chain: uncharacterized protein (399 aa).

The tract at residues 375-399 is disordered; sequence AAGGHRGSHGKSEQAATVRVVDDRR.

Belongs to the mycobacterial PPE family.

This is an uncharacterized protein from Mycobacterium tuberculosis (strain ATCC 25618 / H37Rv).